A 149-amino-acid polypeptide reads, in one-letter code: D-aminoacyl-tRNA deacylase (149 aa).

The Gly-cisPro motif, important for rejection of L-amino acids signature appears at 137-138; that stretch reads GP.

This sequence belongs to the DTD family. As to quaternary structure, homodimer.

It localises to the cytoplasm. The enzyme catalyses glycyl-tRNA(Ala) + H2O = tRNA(Ala) + glycine + H(+). The catalysed reaction is a D-aminoacyl-tRNA + H2O = a tRNA + a D-alpha-amino acid + H(+). Its function is as follows. An aminoacyl-tRNA editing enzyme that deacylates mischarged D-aminoacyl-tRNAs. Also deacylates mischarged glycyl-tRNA(Ala), protecting cells against glycine mischarging by AlaRS. Acts via tRNA-based rather than protein-based catalysis; rejects L-amino acids rather than detecting D-amino acids in the active site. By recycling D-aminoacyl-tRNA to D-amino acids and free tRNA molecules, this enzyme counteracts the toxicity associated with the formation of D-aminoacyl-tRNA entities in vivo and helps enforce protein L-homochirality. This Clostridium botulinum (strain 657 / Type Ba4) protein is D-aminoacyl-tRNA deacylase.